Consider the following 1342-residue polypeptide: DNA-directed RNA polymerase subunit beta (1342 aa).

An N6-acetyllysine mark is found at Lys1022 and Lys1200.

The protein belongs to the RNA polymerase beta chain family. The RNAP catalytic core consists of 2 alpha, 1 beta, 1 beta' and 1 omega subunit. When a sigma factor is associated with the core the holoenzyme is formed, which can initiate transcription.

The enzyme catalyses RNA(n) + a ribonucleoside 5'-triphosphate = RNA(n+1) + diphosphate. Functionally, DNA-dependent RNA polymerase catalyzes the transcription of DNA into RNA using the four ribonucleoside triphosphates as substrates. The protein is DNA-directed RNA polymerase subunit beta of Escherichia coli O139:H28 (strain E24377A / ETEC).